The following is a 708-amino-acid chain: Glycine--tRNA ligase beta subunit (708 aa).

This sequence belongs to the class-II aminoacyl-tRNA synthetase family. Tetramer of two alpha and two beta subunits.

The protein localises to the cytoplasm. The enzyme catalyses tRNA(Gly) + glycine + ATP = glycyl-tRNA(Gly) + AMP + diphosphate. This chain is Glycine--tRNA ligase beta subunit, found in Paracidovorax citrulli (strain AAC00-1) (Acidovorax citrulli).